Here is a 306-residue protein sequence, read N- to C-terminus: Bifunctional protein FolD (306 aa).

Residues 166–168 and Ile-232 contribute to the NADP(+) site; that span reads GRS.

The protein belongs to the tetrahydrofolate dehydrogenase/cyclohydrolase family. Homodimer.

It carries out the reaction (6R)-5,10-methylene-5,6,7,8-tetrahydrofolate + NADP(+) = (6R)-5,10-methenyltetrahydrofolate + NADPH. The catalysed reaction is (6R)-5,10-methenyltetrahydrofolate + H2O = (6R)-10-formyltetrahydrofolate + H(+). It participates in one-carbon metabolism; tetrahydrofolate interconversion. In terms of biological role, catalyzes the oxidation of 5,10-methylenetetrahydrofolate to 5,10-methenyltetrahydrofolate and then the hydrolysis of 5,10-methenyltetrahydrofolate to 10-formyltetrahydrofolate. The sequence is that of Bifunctional protein FolD from Methylorubrum extorquens (strain CM4 / NCIMB 13688) (Methylobacterium extorquens).